Reading from the N-terminus, the 146-residue chain is MSLPAGREATLLAFDYGEKRIGVAVGNSLTRRARPLVIVQNRSREYRFEAVGKLIAEWKPDALVVGLPFHPDGAPHEMTQLAKRFGNQLNGRFNLPVTWVDERYSSVEAKAEIRAGNGRADMLDAEAASIILQQYLDGLSDDHEFH.

Belongs to the YqgF nuclease family.

The protein resides in the cytoplasm. Its function is as follows. Could be a nuclease involved in processing of the 5'-end of pre-16S rRNA. The polypeptide is Putative pre-16S rRNA nuclease (Paraburkholderia phytofirmans (strain DSM 17436 / LMG 22146 / PsJN) (Burkholderia phytofirmans)).